Here is a 226-residue protein sequence, read N- to C-terminus: Lipoprotein-releasing system ATP-binding protein LolD (226 aa).

Residues 5–225 (FALSNISKFF…EINSCMLSSV (221 aa)) enclose the ABC transporter domain. 40-47 (GRSGSGKS) contacts ATP.

It belongs to the ABC transporter superfamily. Lipoprotein translocase (TC 3.A.1.125) family. In terms of assembly, the complex is composed of two ATP-binding proteins (LolD) and two transmembrane proteins (LolC and LolE).

The protein localises to the cell inner membrane. In terms of biological role, part of the ABC transporter complex LolCDE involved in the translocation of mature outer membrane-directed lipoproteins, from the inner membrane to the periplasmic chaperone, LolA. Responsible for the formation of the LolA-lipoprotein complex in an ATP-dependent manner. This Ehrlichia canis (strain Jake) protein is Lipoprotein-releasing system ATP-binding protein LolD.